Reading from the N-terminus, the 144-residue chain is Small ribosomal subunit protein uS11c (144 aa).

This sequence belongs to the universal ribosomal protein uS11 family. Part of the 30S ribosomal subunit.

It is found in the plastid. It localises to the chloroplast. The sequence is that of Small ribosomal subunit protein uS11c from Oenothera biennis (German evening primrose).